A 411-amino-acid chain; its full sequence is CCA-adding enzyme (411 aa).

ATP-binding residues include glycine 8 and arginine 11. CTP-binding residues include glycine 8 and arginine 11. Mg(2+) contacts are provided by glutamate 21 and aspartate 23. Residues arginine 91, arginine 137, and arginine 140 each coordinate ATP. 3 residues coordinate CTP: arginine 91, arginine 137, and arginine 140. The HD domain occupies 227-328 (LGNQTMTRLS…MTIFQAFDCW (102 aa)).

It belongs to the tRNA nucleotidyltransferase/poly(A) polymerase family. Bacterial CCA-adding enzyme type 2 subfamily. Requires Mg(2+) as cofactor.

It carries out the reaction a tRNA precursor + 2 CTP + ATP = a tRNA with a 3' CCA end + 3 diphosphate. The enzyme catalyses a tRNA with a 3' CCA end + 2 CTP + ATP = a tRNA with a 3' CCACCA end + 3 diphosphate. Catalyzes the addition and repair of the essential 3'-terminal CCA sequence in tRNAs without using a nucleic acid template. Adds these three nucleotides in the order of C, C, and A to the tRNA nucleotide-73, using CTP and ATP as substrates and producing inorganic pyrophosphate. tRNA 3'-terminal CCA addition is required both for tRNA processing and repair. Also involved in tRNA surveillance by mediating tandem CCA addition to generate a CCACCA at the 3' terminus of unstable tRNAs. While stable tRNAs receive only 3'-terminal CCA, unstable tRNAs are marked with CCACCA and rapidly degraded. This chain is CCA-adding enzyme, found in Blochmanniella floridana.